The following is a 404-amino-acid chain: Argininosuccinate synthase (404 aa).

ATP-binding positions include 11–19 and alanine 38; that span reads AYSGGLDTS. L-citrulline is bound by residues tyrosine 91 and serine 96. Position 121 (glycine 121) interacts with ATP. The L-aspartate site is built by threonine 123, asparagine 127, and aspartate 128. Residue asparagine 127 coordinates L-citrulline. L-citrulline contacts are provided by arginine 131, serine 182, serine 191, glutamate 267, and tyrosine 279.

It belongs to the argininosuccinate synthase family. Type 1 subfamily. As to quaternary structure, homotetramer.

The protein resides in the cytoplasm. It carries out the reaction L-citrulline + L-aspartate + ATP = 2-(N(omega)-L-arginino)succinate + AMP + diphosphate + H(+). Its pathway is amino-acid biosynthesis; L-arginine biosynthesis; L-arginine from L-ornithine and carbamoyl phosphate: step 2/3. The protein is Argininosuccinate synthase of Paramagnetospirillum magneticum (strain ATCC 700264 / AMB-1) (Magnetospirillum magneticum).